The chain runs to 864 residues: Protein translocase subunit SecA (864 aa).

Residues Gln87, 105 to 109, and Asp512 each bind ATP; that span reads GEGKT.

It belongs to the SecA family. Monomer and homodimer. Part of the essential Sec protein translocation apparatus which comprises SecA, SecYEG and auxiliary proteins SecDF-YajC and YidC.

It is found in the cell inner membrane. It localises to the cytoplasm. The catalysed reaction is ATP + H2O + cellular proteinSide 1 = ADP + phosphate + cellular proteinSide 2.. Part of the Sec protein translocase complex. Interacts with the SecYEG preprotein conducting channel. Has a central role in coupling the hydrolysis of ATP to the transfer of proteins into and across the cell membrane, serving as an ATP-driven molecular motor driving the stepwise translocation of polypeptide chains across the membrane. The sequence is that of Protein translocase subunit SecA from Buchnera aphidicola subsp. Cinara cedri (strain Cc).